A 268-amino-acid polypeptide reads, in one-letter code: uncharacterized protein (268 aa).

Helical transmembrane passes span 169 to 189 (AIIYVFMCLFFSLFWFYQGFA), 190 to 210 (GVKTSILTGTAEIGLAILWLL), and 225 to 245 (IFAGFACLGSEIFMWVLLSVF).

The protein resides in the cell membrane. This is an uncharacterized protein from Bacillus subtilis (strain 168).